A 164-amino-acid polypeptide reads, in one-letter code: Endoribonuclease YbeY (164 aa).

Residues histidine 132, histidine 136, and histidine 142 each contribute to the Zn(2+) site.

It belongs to the endoribonuclease YbeY family. The cofactor is Zn(2+).

The protein resides in the cytoplasm. In terms of biological role, single strand-specific metallo-endoribonuclease involved in late-stage 70S ribosome quality control and in maturation of the 3' terminus of the 16S rRNA. The protein is Endoribonuclease YbeY of Clostridium kluyveri (strain NBRC 12016).